A 291-amino-acid chain; its full sequence is Nucleotide-binding protein MSMEG_3079/MSMEI_3001 (291 aa).

Position 14-21 (14-21 (GLSGAGRG)) interacts with ATP. GTP is bound at residue 65 to 68 (DVRS).

It belongs to the RapZ-like family.

Displays ATPase and GTPase activities. In Mycolicibacterium smegmatis (strain ATCC 700084 / mc(2)155) (Mycobacterium smegmatis), this protein is Nucleotide-binding protein MSMEG_3079/MSMEI_3001.